The sequence spans 314 residues: Elongation factor Ts (314 aa).

Residues 82-85 form an involved in Mg(2+) ion dislocation from EF-Tu region; that stretch reads TDFV.

The protein belongs to the EF-Ts family.

Its subcellular location is the cytoplasm. Functionally, associates with the EF-Tu.GDP complex and induces the exchange of GDP to GTP. It remains bound to the aminoacyl-tRNA.EF-Tu.GTP complex up to the GTP hydrolysis stage on the ribosome. The chain is Elongation factor Ts from Nostoc punctiforme (strain ATCC 29133 / PCC 73102).